A 516-amino-acid polypeptide reads, in one-letter code: Probable cyclic di-GMP phosphodiesterase PdeB (516 aa).

2 helical membrane passes run 6–26 (LVGL…GLSI) and 242–262 (QVFI…MFVL). Positions 268 to 516 (IQSPHHRLQD…DFLRWAEQHL (249 aa)) constitute an EAL domain.

It localises to the cell inner membrane. It catalyses the reaction 3',3'-c-di-GMP + H2O = 5'-phosphoguanylyl(3'-&gt;5')guanosine + H(+). Its function is as follows. Phosphodiesterase (PDE) that catalyzes the hydrolysis of cyclic-di-GMP (c-di-GMP) to 5'-pGpG. The protein is Probable cyclic di-GMP phosphodiesterase PdeB of Escherichia coli (strain K12).